We begin with the raw amino-acid sequence, 63 residues long: Large ribosomal subunit protein uL30 (63 aa).

The protein belongs to the universal ribosomal protein uL30 family. As to quaternary structure, part of the 50S ribosomal subunit.

The protein is Large ribosomal subunit protein uL30 of Geobacillus stearothermophilus (Bacillus stearothermophilus).